Reading from the N-terminus, the 338-residue chain is L-serine dehydratase (338 aa).

Lys-39 bears the N6-(pyridoxal phosphate)lysine mark.

The protein belongs to the serine/threonine dehydratase family. Pyridoxal 5'-phosphate serves as cofactor.

It is found in the cytoplasm. The catalysed reaction is L-serine = pyruvate + NH4(+). It functions in the pathway carbohydrate biosynthesis; gluconeogenesis. The sequence is that of L-serine dehydratase (SDL1) from Saccharomyces cerevisiae (strain RM11-1a) (Baker's yeast).